The following is a 186-amino-acid chain: Small ribosomal subunit protein uS7 (186 aa).

This sequence belongs to the universal ribosomal protein uS7 family. In terms of assembly, part of the 30S ribosomal subunit.

In terms of biological role, one of the primary rRNA binding proteins, it binds directly to 16S rRNA where it nucleates assembly of the head domain of the 30S subunit. Is located at the subunit interface close to the decoding center. This is Small ribosomal subunit protein uS7 from Methanothermobacter thermautotrophicus (strain ATCC 29096 / DSM 1053 / JCM 10044 / NBRC 100330 / Delta H) (Methanobacterium thermoautotrophicum).